The following is an 896-amino-acid chain: Translation initiation factor IF-2 (896 aa).

Positions 117 to 174 (AEAEAKAKAEAEAKAKVDAEAKVKAKAEAEAKAKAKVQTEKPAAETAEDKAAKAEEAK) are enriched in basic and acidic residues. The tract at residues 117-303 (AEAEAKAKAE…TRSVAPESMD (187 aa)) is disordered. The span at 175 to 195 (LLAAQDAVAKAKANEEASAAA) shows a compositional bias: low complexity. Over residues 196 to 227 (DEARRLAEENEKRWAEEEKARKEAEKSVDHHV) the composition is skewed to basic and acidic residues. Residues 254 to 268 (PSANAGNNANANAGA) show a composition bias toward low complexity. The 168-residue stretch at 396 to 563 (PRAPVVTIMG…GILLEAEVLE (168 aa)) folds into the tr-type G domain. The tract at residues 405–412 (GHVDHGKT) is G1. 405 to 412 (GHVDHGKT) contributes to the GTP binding site. The segment at 430–434 (GITQH) is G2. The segment at 451–454 (DTPG) is G3. Residues 451 to 455 (DTPGH) and 505 to 508 (NKID) contribute to the GTP site. The G4 stretch occupies residues 505-508 (NKID). The interval 541-543 (SAK) is G5.

This sequence belongs to the TRAFAC class translation factor GTPase superfamily. Classic translation factor GTPase family. IF-2 subfamily.

Its subcellular location is the cytoplasm. One of the essential components for the initiation of protein synthesis. Protects formylmethionyl-tRNA from spontaneous hydrolysis and promotes its binding to the 30S ribosomal subunits. Also involved in the hydrolysis of GTP during the formation of the 70S ribosomal complex. The sequence is that of Translation initiation factor IF-2 from Shewanella pealeana (strain ATCC 700345 / ANG-SQ1).